The sequence spans 352 residues: tRNA pseudouridine synthase D (352 aa).

Residue Asp81 is the Nucleophile of the active site. Residues 157–303 (GIPNYFGAQR…MEHERRILRL (147 aa)) form the TRUD domain.

It belongs to the pseudouridine synthase TruD family.

It catalyses the reaction uridine(13) in tRNA = pseudouridine(13) in tRNA. Functionally, responsible for synthesis of pseudouridine from uracil-13 in transfer RNAs. The polypeptide is tRNA pseudouridine synthase D (Pseudomonas syringae pv. syringae (strain B728a)).